Reading from the N-terminus, the 68-residue chain is Tau-scoloptoxin(04)-Ssm1b (68 aa).

A signal peptide spans 1–25; it reads MLKSFCILSVFMVLFLAKFPDLCSG. Positions 26–36 are excised as a propeptide; sequence EEISPLKIVVR. Disulfide bonds link C45/C56 and C50/C63. The segment at 55 to 67 is highly charged C-terminal region, binds to TRPV1 channel; the sequence is RCSIVDKQCIKKE.

Belongs to the scoloptoxin-04 family. In terms of tissue distribution, expressed by the venom gland.

The protein localises to the secreted. Functionally, extremely potent agonist and potentiator of TRPV1 (EC(50)=470-521.5 nM (mouse)). It strongly promotes the heat activation process by downshifting the activation threshold temperature. It preferably binds to the activated channel and promotes its opening. Holding the channel closed by cooling prevents binding of this toxin, leaving it ineffective. The toxin binds to the charge-rich outer pore region of the channel where it directly interacts with the pore helix and turret, two adjacent structural elements known to be critical for activation gating of TRPV1. In comparison with Sm1b, induces a TRPV1 desensitization with slower kinetics (20 seconds). In vivo, induces pain in mice after intraplantar injection. In terms of biological role, potent agonist and probable potentiator of TRPV1 (EC(50)=38.35 uM (mouse)). Also binds to the outer pore region of TRPV1. In comparison with Sm1a, induces a TRPV1 desensitization with faster kinetics (2 seconds) and leads to a more complete TRPV1 desensitization. Desensitization is achieved by reducing both the open probability and the single-channel conductance upon prolonged exposure. This Scolopendra mutilans (Chinese red-headed centipede) protein is Tau-scoloptoxin(04)-Ssm1b.